Reading from the N-terminus, the 509-residue chain is Flotillin-like protein FloT (509 aa).

Residues 1–3 lie on the Cytoplasmic side of the membrane; sequence MTM. Residues 4–24 lie within the membrane without spanning it; that stretch reads PIIMIIGVVFFLLIALIAVFI. Over 25–509 the chain is Cytoplasmic; it reads TKYRTAGPDE…KEAKTIQKSE (485 aa). The tract at residues 119–301 is PHB domain; sequence AAEQFLGKSK…KIIERQKQIE (183 aa). The tract at residues 203–509 is required for correct localization; the sequence is RIAQVKRDAD…KEAKTIQKSE (307 aa). 4 consecutive short sequence motifs (EA repeat) follow at residues 342 to 344, 357 to 360, 370 to 373, and 390 to 394; these read AEA, AEAE, and AEAEA. Positions 485–509 are not required for correct localization; it reads KGNVKQSINELTNEIKEAKTIQKSE.

It belongs to the band 7/mec-2 family. Flotillin subfamily. As to quaternary structure, homooligomerizes. Oligomerizes in very large complexes in vitro. Interacts with FloA, FtsH, FtsX, OppA, SdhA and SecY in detergent-resistant membrane (DRM) fractions. Interacts with FtsH at midcell. Interacts with FloA. Interacts in vivo with KinC, FloA, FtsH and ResE. Interacts with ResE, colocalizes with ResE in FloT-only membrane rafts. Another study shows nearly complete colocalization with NfeD2, but only minor colocalization with FtsH or KinC.

The protein resides in the cell membrane. The protein localises to the membrane raft. In terms of biological role, found in functional membrane microdomains (FMM) that may be equivalent to eukaryotic membrane rafts. FMMs are highly dynamic and increase in number as cells age. FloA and FloT function is partially redundant; double deletions have marked synthetic phenotypes. Flotillins are thought to be important factors in membrane fluidity, especially during periods of rapid growth in rich media. Whether specific proteins are associated with FMMs is controversial; in one study FloT rafts have been shown to include proteins involved in adaptation to stationary phase, while FloA-FloT rafts include proteins involved in differentiation including sporulation, biofilm formation and DNA uptake competence. Another (more finely resolved) study only showed association of NfeD2 with FloT rafts of all the proteins examined. Aids homooligomerization of KinC and KinD but not KinB, may prevent incorrect hetero-association of the above kinases. Simultaneous overexpression of both FloA and FloT leads to defects in cell division and differentiation, in part caused by stabilization of FtsH and its subsequent increased ability to degrade proteins. Cells make more biofilm, are about half as long, have less EzrA and more frequent Z-rings. Involved in spatial organization of membranes, perhaps recruiting proteins (e.g. NfeD2) to specific membrane regions. Plays a role in phosphorylation of master regulator Spo0A, an early sporulation event. Plays a non-redundant role with dynamin-like protein A (dynA) in membrane dynamics and cell shape. The protein is Flotillin-like protein FloT of Bacillus subtilis (strain 168).